A 303-amino-acid polypeptide reads, in one-letter code: Signal recognition particle receptor FtsY (303 aa).

Residues 108-115 (GVNGAGKT), 190-194 (DTAGR), and 254-257 (TKLD) contribute to the GTP site.

Belongs to the GTP-binding SRP family. FtsY subfamily. Part of the signal recognition particle protein translocation system, which is composed of SRP and FtsY. SRP is a ribonucleoprotein composed of Ffh and a 4.5S RNA molecule.

It is found in the cell inner membrane. It localises to the cytoplasm. It carries out the reaction GTP + H2O = GDP + phosphate + H(+). Functionally, involved in targeting and insertion of nascent membrane proteins into the cytoplasmic membrane. Acts as a receptor for the complex formed by the signal recognition particle (SRP) and the ribosome-nascent chain (RNC). Interaction with SRP-RNC leads to the transfer of the RNC complex to the Sec translocase for insertion into the membrane, the hydrolysis of GTP by both Ffh and FtsY, and the dissociation of the SRP-FtsY complex into the individual components. The sequence is that of Signal recognition particle receptor FtsY from Rickettsia conorii (strain ATCC VR-613 / Malish 7).